The chain runs to 1684 residues: A-kinase anchor protein 12 (1684 aa).

The disordered stretch occupies residues 1–124; sequence MGAGSSTEQR…DITKDEQEET (124 aa). G2 is lipidated: N-myristoyl glycine. Phosphoserine is present on residues S11, S18, S22, and S27. The span at 30-48 shows a compositional bias: low complexity; sequence GPAAEASGAAGDPADADPA. Acidic residues predominate over residues 75-86; the sequence is ESQDGQEEEVTV. Over residues 89-105 the composition is skewed to basic and acidic residues; that stretch reads VGQRESEDVKEKDRAKE. Phosphoserine is present on S136. Disordered regions lie at residues 175-281 and 296-353; these read SDTV…ETTS and KKTS…SADY. Residues 212–227 are compositionally biased toward basic and acidic residues; that stretch reads ASKESELKQSTEKQEG. The segment covering 228–247 has biased composition (polar residues); it reads TLKQAQSSTEIPLQAESGQG. 2 positions are modified to phosphoserine: S234 and S244. Over residues 251–266 the composition is skewed to basic and acidic residues; it reads EAAKDGEENREKEPTK. Positions 253-543 are involved in PKC-binding; the sequence is AKDGEENREK…QHIQTESPES (291 aa). A phosphoserine mark is found at S270 and S273. The segment covering 270 to 281 has biased composition (polar residues); the sequence is SPTSPVSNETTS. Residues 302–320 show a composition bias toward basic and acidic residues; that stretch reads KPKEDDLETSEKRKEQEAE. A compositionally biased stretch (acidic residues) spans 321 to 342; the sequence is KVDEEEGEKTEPAPAEEQEPAE. T330 bears the Phosphothreonine mark. Residue S350 is modified to Phosphoserine. Phosphotyrosine is present on Y353. A phosphoserine mark is found at S371 and S467. Residues 421 to 479 are disordered; it reads GSGESLPPEKLAETQEVPQEAEPVEELMKTKEVCVSGGDHTQLTDLSPEEKMLPKHPEG. The segment covering 468-478 has biased composition (basic and acidic residues); that stretch reads PEEKMLPKHPE. A phosphoserine mark is found at S489, S505, and S507. The disordered stretch occupies residues 492-825; the sequence is RIKVQGSPLK…INEDDPDVPA (334 aa). The span at 497-511 shows a compositional bias: low complexity; sequence GSPLKKLFSSSGLKK. A compositionally biased stretch (basic residues) spans 512 to 521; the sequence is LSGKKQKGKR. Phosphoserine is present on residues S540, S543, S584, S598, S613, and S615. An AKAP CaM-binding 1 motif is present at residues 593–613; sequence ITPWASFKKMVTPKKRVRRPS. Residues 611–625 show a composition bias toward basic and acidic residues; sequence RPSESDKEEELDKVK. Low complexity predominate over residues 626 to 637; the sequence is SATLSSTESTAS. T628 carries the post-translational modification Phosphothreonine. Residues S630, S631, S634, and S637 each carry the phosphoserine modification. Residues 641–660 are compositionally biased toward basic and acidic residues; it reads DEVRAVGEEQRSEEPKRRVD. Phosphoserine occurs at positions 682, 683, and 684. Positions 696–710 are enriched in basic and acidic residues; the sequence is DGHRAEEASKDKEAD. A compositionally biased stretch (polar residues) spans 714-723; it reads ASTQEQDQAH. The segment covering 724–741 has biased composition (low complexity); the sequence is GSSSPEPAGSPSEGEGVS. Residues S733, S745, S767, and S786 each carry the phosphoserine modification. Positions 740–760 match the AKAP CaM-binding 2 motif; sequence VSTWESFKRLVTPRKKSKSKL. The short motif at 781 to 801 is the AKAP CaM-binding 3 element; it reads EESWVSIKKFIPGRRKKRADG. Phosphothreonine is present on T871. Position 873 is a phosphoserine (S873). The disordered stretch occupies residues 970–1001; sequence TEASGAEETTDMVSAVSQLSDSPDTTEEATPV. Residues 980–992 are compositionally biased toward polar residues; it reads DMVSAVSQLSDSP. Residue K1030 forms a Glycyl lysine isopeptide (Lys-Gly) (interchain with G-Cter in SUMO1) linkage. Disordered stretches follow at residues 1055 to 1106, 1121 to 1211, 1232 to 1365, and 1391 to 1492; these read VEED…VTED, LMEQ…DVLE, EGEA…DKAD, and TVAT…REKI. The residue at position 1059 (S1059) is a Phosphoserine. Residues 1130–1176 are compositionally biased toward polar residues; it reads SSETLTDSETNGSTPLADSDTPNGTQQDETVDSQDSNAIAAVKQSQV. Basic and acidic residues-rich tracts occupy residues 1198–1210 and 1239–1254; these read QEEHREKPGRDVL and DGEKVKDGQCVKELEV. S1292 is modified (phosphoserine). Residues 1293–1331 show a composition bias toward basic and acidic residues; sequence PEKREMGTDVEKEETETKTEQASEEHEQETAAPEHEGTH. A phosphoserine mark is found at S1351, S1355, and S1357. The span at 1467-1492 shows a compositional bias: basic and acidic residues; it reads QRSDEDNKPDAGPDAAGKESAAREKI. An RII-binding region spans residues 1501 to 1514; it reads ELESKSNKIVQSVI. S1546 and S1645 each carry phosphoserine. The interval 1568–1684 is disordered; sequence TLSAVAQEGL…QEPKGDLTES (117 aa). Over residues 1653 to 1684 the composition is skewed to basic and acidic residues; sequence LTEEGDALKEEMNKAQTEEDDLQEPKGDLTES.

In terms of assembly, binds to dimeric RII-alpha regulatory subunit of PKC. Isoform 1 is predominantly found in the nervous system. Isoform 3 is testis specific.

Its subcellular location is the cytoplasm. It localises to the cytoskeleton. The protein localises to the membrane. In terms of biological role, anchoring protein that mediates the subcellular compartmentation of protein kinase A (PKA) and protein kinase C (PKC). The chain is A-kinase anchor protein 12 (Akap12) from Mus musculus (Mouse).